Reading from the N-terminus, the 436-residue chain is Cholecystokinin receptor type A (436 aa).

Over 1-41 (MDVVDSLLMNGSNITPPCELGLENETLFCLDQPQPSKEWQS) the chain is Extracellular. N-linked (GlcNAc...) asparagine glycosylation is found at Asn10 and Asn24. The cysteines at positions 18 and 29 are disulfide-linked. Residues 42–67 (AVQILLYSFIFLLSVLGNTLVITVLI) form a helical membrane-spanning segment. Residues 68 to 77 (RNKRMRTVTN) are Cytoplasmic-facing. The chain crosses the membrane as a helical span at residues 78-104 (IFLLSLAVSDLMLCLFCMPFNLIPNLL). Over 105–115 (KDFIFGSAVCK) the chain is Extracellular. Cys114 and Cys196 are disulfide-bonded. Residues 116–137 (TTTYFMGTSVSVSTFNLVAISL) form a helical membrane-spanning segment. Residues 138–157 (ERYGAICRPLQSRVWQTKSH) lie on the Cytoplasmic side of the membrane. Residues 158–178 (ALKVIAATWCLSFTIMTPYPI) traverse the membrane as a helical segment. Over 179–210 (YSNLVPFTKNNNQTANMCRFLLPSDAMQQSWQ) the chain is Extracellular. A glycan (N-linked (GlcNAc...) asparagine) is linked at Asn190. A helical membrane pass occupies residues 211–234 (TFLLLILFLIPGVVMVVAYGLISL). Over 235–321 (ELYQGIKFDA…NLIAKKRVIR (87 aa)) the chain is Cytoplasmic. Positions 252–280 (EKRLSSGGGGGGGSSSSRYEDSDGCYLQK) are disordered. The chain crosses the membrane as a helical span at residues 322–342 (MLIVIVVLFFLCWMPIFSANA). Over 343–357 (WRAYDTVSAEKHLSG) the chain is Extracellular. A helical membrane pass occupies residues 358–381 (TPISFILLLSYTSSCVNPIIYCFM). The Cytoplasmic portion of the chain corresponds to 382–436 (NKRFRLGFMATFPCCPNPGPTGVRGEVGEEEDGRTIRASLSRYSYSHMSTSAPPH). Residue Cys395 is the site of S-palmitoyl cysteine attachment.

It belongs to the G-protein coupled receptor 1 family.

It is found in the cell membrane. In terms of biological role, receptor for cholecystokinin. Mediates pancreatic growth and enzyme secretion, smooth muscle contraction of the gall bladder and stomach. Has a 1000-fold higher affinity for CCK rather than for gastrin. It modulates feeding and dopamine-induced behavior in the central and peripheral nervous system. This receptor mediates its action by association with G proteins that activate a phosphatidylinositol-calcium second messenger system. The sequence is that of Cholecystokinin receptor type A (Cckar) from Mus musculus (Mouse).